Consider the following 549-residue polypeptide: ATP synthase subunit alpha (549 aa).

An ATP-binding site is contributed by glycine 172–threonine 179.

The protein belongs to the ATPase alpha/beta chains family. In terms of assembly, F-type ATPases have 2 components, CF(1) - the catalytic core - and CF(0) - the membrane proton channel. CF(1) has five subunits: alpha(3), beta(3), gamma(1), delta(1), epsilon(1). CF(0) has three main subunits: a(1), b(2) and c(9-12). The alpha and beta chains form an alternating ring which encloses part of the gamma chain. CF(1) is attached to CF(0) by a central stalk formed by the gamma and epsilon chains, while a peripheral stalk is formed by the delta and b chains.

It localises to the cell membrane. It carries out the reaction ATP + H2O + 4 H(+)(in) = ADP + phosphate + 5 H(+)(out). In terms of biological role, produces ATP from ADP in the presence of a proton gradient across the membrane. The alpha chain is a regulatory subunit. In Mycobacterium tuberculosis (strain CDC 1551 / Oshkosh), this protein is ATP synthase subunit alpha.